The chain runs to 458 residues: Divalent metal cation transporter MntH (458 aa).

The next 11 membrane-spanning stretches (helical) occupy residues 38-58 (GFWK…VGYM), 76-96 (SLLS…AMAA), 119-139 (GGFL…AEII), 151-171 (MPLI…LLLM), 180-200 (AVVA…VILA), 223-243 (MLYL…LFLG), 275-295 (LTMA…LFFG), 315-335 (IVGA…LLAS), 370-390 (LMSV…EAKI), 393-413 (LLTF…IPLV), and 437-457 (FISG…LGFV).

It belongs to the NRAMP family.

The protein localises to the cell membrane. H(+)-stimulated, divalent metal cation uptake system. The chain is Divalent metal cation transporter MntH from Lacticaseibacillus paracasei (strain ATCC 334 / BCRC 17002 / CCUG 31169 / CIP 107868 / KCTC 3260 / NRRL B-441) (Lactobacillus paracasei).